The chain runs to 197 residues: MAERENRGRGRGRNREEETPEFADRLVAINRVSKTVKGGKRFGFAALVVVGDQRGRVGFGKGKAKEVPEAIRKATEQAKRQLIRVPLKEGRTLHHDVKGHHGAGKVVMRTAPEGTGIIAGGPMRAVFEMLGVKDVVSKSTGSQNPYNMIRATLDGLRNESSPRQVASRRGKKVADILPKRDDHPQIDGEQAPVSEEA.

Residues Met1 to Glu17 show a composition bias toward basic and acidic residues. Disordered stretches follow at residues Met1–Phe22 and Asn158–Ala197. Residues Phe22 to Val85 form the S5 DRBM domain. Over residues Lys172–Ile186 the composition is skewed to basic and acidic residues.

It belongs to the universal ribosomal protein uS5 family. In terms of assembly, part of the 30S ribosomal subunit. Contacts proteins S4 and S8.

In terms of biological role, with S4 and S12 plays an important role in translational accuracy. Its function is as follows. Located at the back of the 30S subunit body where it stabilizes the conformation of the head with respect to the body. This is Small ribosomal subunit protein uS5 from Jannaschia sp. (strain CCS1).